The chain runs to 565 residues: Proline--tRNA ligase (565 aa).

It belongs to the class-II aminoacyl-tRNA synthetase family. ProS type 1 subfamily. Homodimer.

Its subcellular location is the cytoplasm. The catalysed reaction is tRNA(Pro) + L-proline + ATP = L-prolyl-tRNA(Pro) + AMP + diphosphate. In terms of biological role, catalyzes the attachment of proline to tRNA(Pro) in a two-step reaction: proline is first activated by ATP to form Pro-AMP and then transferred to the acceptor end of tRNA(Pro). As ProRS can inadvertently accommodate and process non-cognate amino acids such as alanine and cysteine, to avoid such errors it has two additional distinct editing activities against alanine. One activity is designated as 'pretransfer' editing and involves the tRNA(Pro)-independent hydrolysis of activated Ala-AMP. The other activity is designated 'posttransfer' editing and involves deacylation of mischarged Ala-tRNA(Pro). The misacylated Cys-tRNA(Pro) is not edited by ProRS. The protein is Proline--tRNA ligase of Francisella philomiragia subsp. philomiragia (strain ATCC 25017 / CCUG 19701 / FSC 153 / O#319-036).